The following is a 283-amino-acid chain: 4-diphosphocytidyl-2-C-methyl-D-erythritol kinase (283 aa).

Lys10 is a catalytic residue. 94–104 (PVAAGLAGGSS) is a binding site for ATP. The active site involves Asp136.

It belongs to the GHMP kinase family. IspE subfamily.

The catalysed reaction is 4-CDP-2-C-methyl-D-erythritol + ATP = 4-CDP-2-C-methyl-D-erythritol 2-phosphate + ADP + H(+). It participates in isoprenoid biosynthesis; isopentenyl diphosphate biosynthesis via DXP pathway; isopentenyl diphosphate from 1-deoxy-D-xylulose 5-phosphate: step 3/6. Catalyzes the phosphorylation of the position 2 hydroxy group of 4-diphosphocytidyl-2C-methyl-D-erythritol. The sequence is that of 4-diphosphocytidyl-2-C-methyl-D-erythritol kinase from Enterococcus faecalis (strain ATCC 700802 / V583).